The sequence spans 494 residues: MIKFALALTLCLAGASLSLAQHNPQWWGNRNTIVHLFEWKWSDIAEECETFLAPRGFAGVQVSPVNENIISAGRPWWERYQPISYKLTTRSGNEEEFADMVRRCNDVGIRIYVDVLLNHMSGDFDGVAVGTAGTEAEPSKKSFPGVPYTAQDFHPSCEITDWNNRFQVQECELVGLKDLNQHSDYVRSKLIEFLDHLIELGVAGFRVDAAKHMAAEDLEYIYGSLSNLNIEHGFPHNARPFIFQEVIDHGHETVSREEYNQLGAVTEFRFSEEIGKAFRGNNALKWLQSWGTDWGFLNSEQALTFVDNHDNQRDQGSVLNYKSPKQYKMATAFHLAYPYGISRVMSSFAFDDHDTPPPQDAQENIISPEFDEDGACVNGWICEHRWRQIYAMVGFKNAVRDTELTGWWDNGDNQISFCRGNKGFLAVNNNLYDLSQELNTCLPAGEYCDVISGSLIDGACTGKSVTVNEYGYGYIHIGSDDFDGVLALHVNAKV.

The first 20 residues, 1-20, serve as a signal peptide directing secretion; that stretch reads MIKFALALTLCLAGASLSLA. A Pyrrolidone carboxylic acid modification is found at Gln21. A disulfide bridge links Cys48 with Cys104. 3 residues coordinate Ca(2+): Asn118, Gln169, and Asp178. Cys157 and Cys171 are joined by a disulfide. Arg206 contacts chloride. Asp208 serves as the catalytic Nucleophile. Ca(2+) is bound at residue His212. The active-site Proton donor is the Glu245. Asn308 and Arg343 together coordinate chloride. 3 cysteine pairs are disulfide-bonded: Cys376–Cys382, Cys418–Cys441, and Cys448–Cys460.

The protein belongs to the glycosyl hydrolase 13 family. In terms of assembly, monomer. Requires Ca(2+) as cofactor. Chloride is required as a cofactor.

It localises to the secreted. The catalysed reaction is Endohydrolysis of (1-&gt;4)-alpha-D-glucosidic linkages in polysaccharides containing three or more (1-&gt;4)-alpha-linked D-glucose units.. This Drosophila jambulina (Fruit fly) protein is Alpha-amylase-related protein (Amyrel).